Reading from the N-terminus, the 188-residue chain is ATP synthase subunit b (188 aa).

A helical membrane pass occupies residues 24 to 44 (LPASYDIVWSLVVFIIVLILF).

The protein belongs to the ATPase B chain family. In terms of assembly, F-type ATPases have 2 components, F(1) - the catalytic core - and F(0) - the membrane proton channel. F(1) has five subunits: alpha(3), beta(3), gamma(1), delta(1), epsilon(1). F(0) has three main subunits: a(1), b(2) and c(10-14). The alpha and beta chains form an alternating ring which encloses part of the gamma chain. F(1) is attached to F(0) by a central stalk formed by the gamma and epsilon chains, while a peripheral stalk is formed by the delta and b chains.

It is found in the cell membrane. F(1)F(0) ATP synthase produces ATP from ADP in the presence of a proton or sodium gradient. F-type ATPases consist of two structural domains, F(1) containing the extramembraneous catalytic core and F(0) containing the membrane proton channel, linked together by a central stalk and a peripheral stalk. During catalysis, ATP synthesis in the catalytic domain of F(1) is coupled via a rotary mechanism of the central stalk subunits to proton translocation. In terms of biological role, component of the F(0) channel, it forms part of the peripheral stalk, linking F(1) to F(0). The chain is ATP synthase subunit b from Corynebacterium diphtheriae (strain ATCC 700971 / NCTC 13129 / Biotype gravis).